A 482-amino-acid chain; its full sequence is Retrovirus-related Pol polyprotein from type-1 retrotransposable element R2 (482 aa).

Residues 1-84 (AYADDLILFA…DYFKYLGSRY (84 aa)) enclose the Reverse transcriptase domain. Positions 208 to 482 (QIPAVEKFYQ…ATGGRGRGDI (275 aa)) are nucleic acid-binding endonuclease.

It catalyses the reaction DNA(n) + a 2'-deoxyribonucleoside 5'-triphosphate = DNA(n+1) + diphosphate. The protein is Retrovirus-related Pol polyprotein from type-1 retrotransposable element R2 of Popillia japonica (Japanese beetle).